Here is a 341-residue protein sequence, read N- to C-terminus: Methionine import ATP-binding protein MetN (341 aa).

The 240-residue stretch at 2 to 241 folds into the ABC transporter domain; the sequence is INLQDVSKVY…PKEQMTKRFV (240 aa). ATP is bound at residue 38-45; it reads GYSGAGKS.

Belongs to the ABC transporter superfamily. Methionine importer (TC 3.A.1.24) family. In terms of assembly, the complex is composed of two ATP-binding proteins (MetN), two transmembrane proteins (MetP) and a solute-binding protein (MetQ).

The protein localises to the cell membrane. The enzyme catalyses L-methionine(out) + ATP + H2O = L-methionine(in) + ADP + phosphate + H(+). It carries out the reaction D-methionine(out) + ATP + H2O = D-methionine(in) + ADP + phosphate + H(+). Functionally, part of the ABC transporter complex MetNPQ involved in methionine import. Responsible for energy coupling to the transport system. It has also been shown to be involved in methionine sulfoxide transport. In Bacillus subtilis (strain 168), this protein is Methionine import ATP-binding protein MetN.